Reading from the N-terminus, the 747-residue chain is Ubiquitin carboxyl-terminal hydrolase 13 (747 aa).

The USP domain maps to 140 to 668 (FGYENFGNTC…TAYVLFYKAM (529 aa)). Cys149 acts as the Nucleophile in catalysis. Disordered stretches follow at residues 172-305 (PKKS…RPPD) and 318-367 (YENP…RKKS). The segment covering 174–183 (KSRESDQPRK) has biased composition (basic and acidic residues). At Ser198 the chain carries Phosphoserine. Residues 225–235 (PVNSVNSNTAG) are compositionally biased toward polar residues. A compositionally biased stretch (basic and acidic residues) spans 251–260 (HVQDNNKKEG). Over residues 319–343 (ENPSRGSSNSNNLDLKGESNSSLST) the composition is skewed to polar residues. His619 acts as the Proton acceptor in catalysis.

This sequence belongs to the peptidase C19 family.

The enzyme catalyses Thiol-dependent hydrolysis of ester, thioester, amide, peptide and isopeptide bonds formed by the C-terminal Gly of ubiquitin (a 76-residue protein attached to proteins as an intracellular targeting signal).. The sequence is that of Ubiquitin carboxyl-terminal hydrolase 13 (UBP13) from Saccharomyces cerevisiae (strain ATCC 204508 / S288c) (Baker's yeast).